The primary structure comprises 663 residues: UvrABC system protein B (663 aa).

Positions 1 to 10 are enriched in basic and acidic residues; the sequence is MIDKRDDKPF. The segment at 1–23 is disordered; sequence MIDKRDDKPFKLKSKYKPSGDQP. The 241-residue stretch at 31–271 folds into the Helicase ATP-binding domain; sequence DNIEGGEKAQ…EQSIAKIQAE (241 aa). 44–51 is a binding site for ATP; it reads GATGTGKT. The Beta-hairpin motif lies at 97-120; the sequence is YYDYYQPEAYVPSSDTYIEKDSSV. In terms of domain architecture, Helicase C-terminal spans 435–601; sequence QMDDLLGEIN…TIKKDIRGLI (167 aa). The UVR domain occupies 627-662; the sequence is KEAINALQKQMQEAAELLDFELAAQMRDLILELKLM.

The protein belongs to the UvrB family. As to quaternary structure, forms a heterotetramer with UvrA during the search for lesions. Interacts with UvrC in an incision complex.

It is found in the cytoplasm. Its function is as follows. The UvrABC repair system catalyzes the recognition and processing of DNA lesions. A damage recognition complex composed of 2 UvrA and 2 UvrB subunits scans DNA for abnormalities. Upon binding of the UvrA(2)B(2) complex to a putative damaged site, the DNA wraps around one UvrB monomer. DNA wrap is dependent on ATP binding by UvrB and probably causes local melting of the DNA helix, facilitating insertion of UvrB beta-hairpin between the DNA strands. Then UvrB probes one DNA strand for the presence of a lesion. If a lesion is found the UvrA subunits dissociate and the UvrB-DNA preincision complex is formed. This complex is subsequently bound by UvrC and the second UvrB is released. If no lesion is found, the DNA wraps around the other UvrB subunit that will check the other stand for damage. The polypeptide is UvrABC system protein B (Streptococcus pyogenes serotype M4 (strain MGAS10750)).